Here is an 883-residue protein sequence, read N- to C-terminus: MLKHSLIAASVITTLAGCSSLQSSEQQVVNSLADNLDIQYEVLTNHGANEGLACQDMGAEWASCNKVNMTLVNQGEAVDSKDWAIYFHSIRLILDVDNEQFKISRVTGDLHKLEPTDKFDGFAAGEEVVLPLVGEYWQLFETDFMPGAFVSAPNAEPKMIASLNTEDVASFVTGLEGNNLKRTPDDNNVFANAVSRFEKNEDLATQDVSTTLLPTPMHVEAGKGKVDIADGIALPKDAFDATQFAAIQDRAEVVGVDVRGDLPVSITVVPADFTGELAKSGAYEMSIKGDGIVIKAFDQAGAFYAVQSIFGLVDSQNADSLPQLSIKDAPRFDYRGVMVDVARNFHSKDAILATLDQMAAYKMNKLHLHLTDDEGWRLEIPGLPELTEVGANRCFDTQEKSCLLPQLGSGPTTDNFGSGYFSKADYVEILKYAKARNIEVIPEIDMPAHARAAVVSMEARYDRLMEEGKEAEANEYRLMDPQDTSNVTTVQFYNKQSFINPCMESSTRFVDKVISEVAAMHQEAGAPLTTWHFGGDEAKNIKLGAGFQDVNAEDKVSWKGTIDLSKQDKPFAQSPQCQTLITDGTVSDFAHLPSHFAEEVSKIVAEKGIPNFQAWQDGLKYSDGEKAFATENTRVNFWDVLYWGGTSSVYEWSKKGYDVIVSNPDYVYMDMPYEVDPKERGYYWATRATDTRKMFGFAPENMPQNAETSVDRDGNGFTGKGEIEAKPFYGLSAQLWSETVRNDEQYEYMVFPRVLAAAQRAWHRADWENDYKVGVEYSQNSNLVDKASLNQDYNRFANVLGQRELAKLEKSGIDYRLPVPGAKVEDGKLAMNVQFPGVTLQYSLDGENWLTYADNARPNVTGEVFIRSVSATGEKVSRITSVK.

Residues Met-1 to Gly-17 form the signal peptide. Cys-18 carries the N-palmitoyl cysteine lipid modification. The S-diacylglycerol cysteine moiety is linked to residue Cys-18. 3 disulfides stabilise this stretch: Cys-54-Cys-64, Cys-394-Cys-402, and Cys-502-Cys-577. The Proton donor role is filled by Glu-537.

It belongs to the glycosyl hydrolase 20 family. In terms of processing, this protein is probably a lipoprotein, its processing is inhibited by globomycin.

Its subcellular location is the cell outer membrane. It catalyses the reaction Hydrolysis of terminal non-reducing N-acetyl-D-hexosamine residues in N-acetyl-beta-D-hexosaminides.. The protein operates within glycan degradation; chitin degradation. Hydrolysis of terminal, non-reducing N-acetyl-beta-D-glucosamine residues in chitobiose and higher analogs, and in glycoproteins. The protein is N,N'-diacetylchitobiase (chb) of Vibrio harveyi (Beneckea harveyi).